We begin with the raw amino-acid sequence, 217 residues long: Twisted gastrulation protein homolog 1-A (217 aa).

The first 26 residues, Met1–Gly26, serve as a signal peptide directing secretion. Residues Asn53 and Asn147 are each glycosylated (N-linked (GlcNAc...) asparagine).

This sequence belongs to the twisted gastrulation protein family.

Its subcellular location is the secreted. Functionally, involved in dorsal-ventral patterning. Appears to function predominantly as a ventralizing factor, through its actions as a BMP signaling agonist, acting through both chd-dependent and chd-independent mechanisms. May also antagonize BMP signaling, probably via formation of ternary complexes with chd and BMPs, resulting in dorsalization. The chain is Twisted gastrulation protein homolog 1-A (twsg1a) from Danio rerio (Zebrafish).